The sequence spans 218 residues: MTNLKLDVQTADGNINGSVELPAEIFDREVSVALLHQVVNAQLAAARQGTHSTKTRGEVRGGGRKPFRQKGTGRARQGSIRAPHFTGGGISHGPKPRDYSQRTPKKMIKAALYGALSDRARNARIHVVSELVPGQTPSTKSAKAFIERLTERKSVLLVVSREDINAQKSANNLPGVHILAADQLNTYDVLKSDDVVFSVEALHTFINRASGAAQEEQN.

The interval 46–102 is disordered; sequence ARQGTHSTKTRGEVRGGGRKPFRQKGTGRARQGSIRAPHFTGGGISHGPKPRDYSQR. A compositionally biased stretch (basic residues) spans 62–73; that stretch reads GGRKPFRQKGTG.

The protein belongs to the universal ribosomal protein uL4 family. Part of the 50S ribosomal subunit.

Its function is as follows. One of the primary rRNA binding proteins, this protein initially binds near the 5'-end of the 23S rRNA. It is important during the early stages of 50S assembly. It makes multiple contacts with different domains of the 23S rRNA in the assembled 50S subunit and ribosome. Forms part of the polypeptide exit tunnel. The protein is Large ribosomal subunit protein uL4 of Corynebacterium glutamicum (strain R).